A 623-amino-acid polypeptide reads, in one-letter code: Isocitrate dehydrogenase kinase/phosphatase (623 aa).

Residues 344–350 (APGIKGM) and Lys365 each bind ATP. Asp400 is an active-site residue.

The protein belongs to the AceK family.

It localises to the cytoplasm. It catalyses the reaction L-seryl-[isocitrate dehydrogenase] + ATP = O-phospho-L-seryl-[isocitrate dehydrogenase] + ADP + H(+). Its function is as follows. Bifunctional enzyme which can phosphorylate or dephosphorylate isocitrate dehydrogenase (IDH) on a specific serine residue. This is a regulatory mechanism which enables bacteria to bypass the Krebs cycle via the glyoxylate shunt in response to the source of carbon. When bacteria are grown on glucose, IDH is fully active and unphosphorylated, but when grown on acetate or ethanol, the activity of IDH declines drastically concomitant with its phosphorylation. This is Isocitrate dehydrogenase kinase/phosphatase from Polaromonas naphthalenivorans (strain CJ2).